The primary structure comprises 270 residues: B3 domain-containing protein Os03g0212300 (270 aa).

2 consecutive DNA-binding regions (TF-B3) follow at residues 13-110 (FEFF…FDET) and 158-265 (VTLR…RKAD).

It is found in the nucleus. In Oryza sativa subsp. japonica (Rice), this protein is B3 domain-containing protein Os03g0212300.